Here is an 845-residue protein sequence, read N- to C-terminus: Poly(A) RNA polymerase gld-4 (845 aa).

The interval 1–55 (MNEDSRLSSSQQPSTSTPRSSIPSTMNSDEPNTCRRLSQSQEQPSTSRTCKSETP) is disordered. Low complexity predominate over residues 7 to 25 (LSSSQQPSTSTPRSSIPST). Residues 26–49 (MNSDEPNTCRRLSQSQEQPSTSRT) show a composition bias toward polar residues. 2 residues coordinate Mg(2+): Asp-139 and Asp-141. The PAP-associated domain occupies 276–335 (NLGHLLLRFLELYSLEFNFEEMGISPGQCCYIPKSASGARYGHKQAQPGNLALEDPLLTA). Over residues 482–506 (KSLEKMPACDDNKKEEELVATRETD) the composition is skewed to basic and acidic residues. Disordered regions lie at residues 482-733 (KSLE…SEEP) and 788-845 (NALT…RLQR). Low complexity predominate over residues 535–551 (TSTQSVNTSATVSTAAS). Composition is skewed to polar residues over residues 561–571 (PGLSSSMGNQS) and 579–588 (GINNRNNSAV). The span at 605-620 (RESKRTQTTSEDKMQD) shows a compositional bias: basic and acidic residues. Residues 643 to 653 (SHKHRNAHPQR) show a composition bias toward basic residues. 4 stretches are compositionally biased toward polar residues: residues 654–666 (QRPSIRNLSQGSD), 695–732 (RQQTNTRNCGPTNNIPYDSFRSQNKNSTLDGSNNSSEE), 788–805 (NALTTSPMTPPSAHTSMQ), and 819–828 (DNNSATSSTD).

Interacts with gls-1 isoform C. Mg(2+) serves as cofactor. The cofactor is Mn(2+). In terms of tissue distribution, germline-specific.

Its subcellular location is the cytoplasm. It is found in the cytoplasmic granule. It localises to the perinuclear region. The enzyme catalyses RNA(n) + ATP = RNA(n)-3'-adenine ribonucleotide + diphosphate. In terms of biological role, cytoplasmic poly(A) RNA polymerase that adds successive AMP monomers to the 3'-end of specific RNAs, forming a poly(A) tail. The enzymatic activity is enhanced by its interaction with gls-1. Required, together with gld-2, for early meiotic progression in male and female germ cells and for gld-1 protein accumulation in the hermaphrodite germline. In the germline, forms a complex with gls-1 which directly binds to gld-1 mRNA and prevents its degradation. This chain is Poly(A) RNA polymerase gld-4, found in Caenorhabditis elegans.